A 220-amino-acid polypeptide reads, in one-letter code: Large ribosomal subunit protein uL16 (220 aa).

It belongs to the universal ribosomal protein uL16 family. In terms of assembly, component of the small ribosomal subunit. Mature ribosomes consist of a small (40S) and a large (60S) subunit. The 40S subunit contains about 33 different proteins and 1 molecule of RNA (18S). The 60S subunit contains about 49 different proteins and 3 molecules of RNA (25S, 5.8S and 5S).

This chain is Large ribosomal subunit protein uL16 (RPL10), found in Euphorbia esula (Leafy spurge).